Reading from the N-terminus, the 391-residue chain is Pyruvate dehydrogenase E1 component subunit beta-3, chloroplastic (391 aa).

A chloroplast-targeting transit peptide spans Met-1 to Val-35. Glu-127 is a binding site for thiamine diphosphate. K(+) contacts are provided by Ile-180, Ala-228, Ile-229, and Asn-233.

Tetramer of 2 alpha and 2 beta subunits. Thiamine diphosphate is required as a cofactor.

Its subcellular location is the plastid. The protein resides in the chloroplast. It catalyses the reaction N(6)-[(R)-lipoyl]-L-lysyl-[protein] + pyruvate + H(+) = N(6)-[(R)-S(8)-acetyldihydrolipoyl]-L-lysyl-[protein] + CO2. The pyruvate dehydrogenase complex catalyzes the overall conversion of pyruvate to acetyl-CoA and CO(2). It contains multiple copies of three enzymatic components: pyruvate dehydrogenase (E1), dihydrolipoamide acetyltransferase (E2) and lipoamide dehydrogenase (E3). The protein is Pyruvate dehydrogenase E1 component subunit beta-3, chloroplastic of Oryza sativa subsp. japonica (Rice).